A 118-amino-acid polypeptide reads, in one-letter code: NADH-quinone oxidoreductase subunit A 1 (118 aa).

Transmembrane regions (helical) follow at residues 1–21 (MLGV…FGLA), 60–80 (FYII…MYPW), and 87–107 (LGIF…VGYI).

This sequence belongs to the complex I subunit 3 family. As to quaternary structure, NDH-1 is composed of 14 different subunits. Subunits NuoA, H, J, K, L, M, N constitute the membrane sector of the complex.

The protein localises to the cell inner membrane. The catalysed reaction is a quinone + NADH + 5 H(+)(in) = a quinol + NAD(+) + 4 H(+)(out). In terms of biological role, NDH-1 shuttles electrons from NADH, via FMN and iron-sulfur (Fe-S) centers, to quinones in the respiratory chain. The immediate electron acceptor for the enzyme in this species is believed to be ubiquinone. Couples the redox reaction to proton translocation (for every two electrons transferred, four hydrogen ions are translocated across the cytoplasmic membrane), and thus conserves the redox energy in a proton gradient. In Geobacter sulfurreducens (strain ATCC 51573 / DSM 12127 / PCA), this protein is NADH-quinone oxidoreductase subunit A 1.